The primary structure comprises 474 residues: MSSSLWLQCLQRLQEELPATEFSMWVRPLQAELKDNTLTLFAPNRFVLDWVRDKYLNNINRLLNEFCGTDIPILRFEVGSRQVVVPSSQIIAPAAPAVTLAPRPLPATRILQDDAPSRSWEPAPSPVQPESKSGYRSNVNPKHNFNNFVEGKSNQLGLAACRQVSDNPGAAYNPLFLYGGTGLGKTHLLHAVGNAIADRKPNARVVYMHSERFVQDMVKALQNNAIEEFKRYYRSVDALLIDDIQFFANKERSQEEFFHTFNALLEGNQQIILTSDRYPREINGVEDRLKSRFGWGLTVAIEPPELETRVAILMKKAENHNIRLPDEVAFFIAKRLRSNVRELEGALNRVIANANFTGRAITIDFVREALRDLLALQEKLVTIDNIQKTVAEYYKIKMSDMLSKRRSRSVARPRQMAMALAKELTNHSLPEIGDAFGGRDHTTVLHACRKIVQLREESHDIKEDYSNLIRTLST.

The interval 1–90 (MSSSLWLQCL…RQVVVPSSQI (90 aa)) is domain I, interacts with DnaA modulators. The segment at 91 to 137 (IAPAAPAVTLAPRPLPATRILQDDAPSRSWEPAPSPVQPESKSGYRS) is domain II. The tract at residues 112 to 137 (QDDAPSRSWEPAPSPVQPESKSGYRS) is disordered. Residues 128 to 137 (QPESKSGYRS) show a composition bias toward polar residues. The segment at 138-354 (NVNPKHNFNN…GALNRVIANA (217 aa)) is domain III, AAA+ region. ATP is bound by residues glycine 182, glycine 184, lysine 185, and threonine 186. The segment at 355 to 474 (NFTGRAITID…YSNLIRTLST (120 aa)) is domain IV, binds dsDNA.

It belongs to the DnaA family. As to quaternary structure, oligomerizes as a right-handed, spiral filament on DNA at oriC.

The protein resides in the cytoplasm. In terms of biological role, plays an essential role in the initiation and regulation of chromosomal replication. ATP-DnaA binds to the origin of replication (oriC) to initiate formation of the DNA replication initiation complex once per cell cycle. Binds the DnaA box (a 9 base pair repeat at the origin) and separates the double-stranded (ds)DNA. Forms a right-handed helical filament on oriC DNA; dsDNA binds to the exterior of the filament while single-stranded (ss)DNA is stabiized in the filament's interior. The ATP-DnaA-oriC complex binds and stabilizes one strand of the AT-rich DNA unwinding element (DUE), permitting loading of DNA polymerase. After initiation quickly degrades to an ADP-DnaA complex that is not apt for DNA replication. Binds acidic phospholipids. This chain is Chromosomal replication initiator protein DnaA, found in Photobacterium profundum (strain SS9).